A 459-amino-acid chain; its full sequence is Cysteine--tRNA ligase (459 aa).

C29 provides a ligand contact to Zn(2+). A 'HIGH' region motif is present at residues 31 to 41 (MTVYDLCHLGH). Positions 213, 238, and 242 each coordinate Zn(2+). The 'KMSKS' region motif lies at 270–274 (KMSKS). K273 is a binding site for ATP.

It belongs to the class-I aminoacyl-tRNA synthetase family. As to quaternary structure, monomer. Requires Zn(2+) as cofactor.

The protein localises to the cytoplasm. The enzyme catalyses tRNA(Cys) + L-cysteine + ATP = L-cysteinyl-tRNA(Cys) + AMP + diphosphate. This is Cysteine--tRNA ligase from Albidiferax ferrireducens (strain ATCC BAA-621 / DSM 15236 / T118) (Rhodoferax ferrireducens).